An 880-amino-acid chain; its full sequence is Alanine--tRNA ligase (880 aa).

Residues H566, H570, C668, and H672 each coordinate Zn(2+).

The protein belongs to the class-II aminoacyl-tRNA synthetase family. Zn(2+) serves as cofactor.

The protein localises to the cytoplasm. It carries out the reaction tRNA(Ala) + L-alanine + ATP = L-alanyl-tRNA(Ala) + AMP + diphosphate. Functionally, catalyzes the attachment of alanine to tRNA(Ala) in a two-step reaction: alanine is first activated by ATP to form Ala-AMP and then transferred to the acceptor end of tRNA(Ala). Also edits incorrectly charged Ser-tRNA(Ala) and Gly-tRNA(Ala) via its editing domain. The protein is Alanine--tRNA ligase of Acetivibrio thermocellus (strain ATCC 27405 / DSM 1237 / JCM 9322 / NBRC 103400 / NCIMB 10682 / NRRL B-4536 / VPI 7372) (Clostridium thermocellum).